The following is a 117-amino-acid chain: Large ribosomal subunit protein uL18 (117 aa).

Belongs to the universal ribosomal protein uL18 family. Part of the 50S ribosomal subunit; part of the 5S rRNA/L5/L18/L25 subcomplex. Contacts the 5S and 23S rRNAs.

In terms of biological role, this is one of the proteins that bind and probably mediate the attachment of the 5S RNA into the large ribosomal subunit, where it forms part of the central protuberance. The polypeptide is Large ribosomal subunit protein uL18 (Actinobacillus pleuropneumoniae serotype 5b (strain L20)).